The primary structure comprises 279 residues: GTP cyclohydrolase MptA (279 aa).

Belongs to the GTP cyclohydrolase IV family. Homodimer. The cofactor is Fe(2+).

It catalyses the reaction GTP + H2O = 7,8-dihydroneopterin 2',3'-cyclic phosphate + formate + diphosphate + H(+). It participates in cofactor biosynthesis; 5,6,7,8-tetrahydromethanopterin biosynthesis. Converts GTP to 7,8-dihydro-D-neopterin 2',3'-cyclic phosphate, the first intermediate in the biosynthesis of coenzyme methanopterin. This is GTP cyclohydrolase MptA from Korarchaeum cryptofilum (strain OPF8).